A 419-amino-acid chain; its full sequence is L-rhamnose isomerase (419 aa).

The Mn(2+) site is built by histidine 262, aspartate 294, and aspartate 296.

This sequence belongs to the rhamnose isomerase family. Homotetramer. Requires Mn(2+) as cofactor.

It localises to the cytoplasm. It carries out the reaction L-rhamnopyranose = L-rhamnulose. It functions in the pathway carbohydrate degradation; L-rhamnose degradation; glycerone phosphate from L-rhamnose: step 1/3. Functionally, catalyzes the interconversion of L-rhamnose and L-rhamnulose. The polypeptide is L-rhamnose isomerase (Salmonella choleraesuis (strain SC-B67)).